Here is an 878-residue protein sequence, read N- to C-terminus: Fanconi-associated nuclease 1 homolog (878 aa).

A UBZ4-type zinc finger spans residues 32–59 (GKTCPLCNIKFSLASYRSHMNVCKVADD). 4 residues coordinate Zn(2+): Cys-35, Cys-38, His-50, and Cys-54. The segment at 88-180 (ENSGQEIPVN…QKSQSESQEA (93 aa)) is disordered. The span at 142–161 (SEVRSVEKEIKKSPVWENRR) shows a compositional bias: basic and acidic residues. A compositionally biased stretch (low complexity) spans 168–179 (QNSQKSQSESQE). Residues Glu-695, Asp-823, Glu-838, and Val-839 each coordinate Mn(2+). In terms of domain architecture, VRR-NUC spans 757-870 (QETIEDNIRR…GIKAEVCHVE (114 aa)).

Belongs to the FAN1 family. Requires Mn(2+) as cofactor. It depends on Mg(2+) as a cofactor.

Its subcellular location is the nucleus. It catalyses the reaction Hydrolytically removes 5'-nucleotides successively from the 3'-hydroxy termini of 3'-hydroxy-terminated oligonucleotides.. In terms of biological role, nuclease required for the repair of DNA interstrand cross-links (ICL). Acts as a 5'-3' exonuclease that anchors at a cut end of DNA and cleaves DNA successively at every third nucleotide, allowing to excise an ICL from one strand through flanking incisions. In Caenorhabditis briggsae, this protein is Fanconi-associated nuclease 1 homolog (fan-1).